The sequence spans 852 residues: Ubiquitin carboxyl-terminal hydrolase 4 (852 aa).

The Rhodanese domain maps to 172–296 (ASGTVLLVDV…WSNAHPDFCV (125 aa)). The segment at 369-393 (RSSSSSSNINERPGSVPPQLSNGST) is disordered. Residues 488–849 (VGLVNCGNSC…NAYVLFYHRI (362 aa)) enclose the USP domain. Catalysis depends on Cys497, which acts as the Nucleophile. Residue His806 is the Proton acceptor of the active site.

Belongs to the peptidase C19 family.

It localises to the cytoplasm. Its subcellular location is the late endosome membrane. It carries out the reaction Thiol-dependent hydrolysis of ester, thioester, amide, peptide and isopeptide bonds formed by the C-terminal Gly of ubiquitin (a 76-residue protein attached to proteins as an intracellular targeting signal).. RFU1 is an inhibitor of deubiquitination activity. Ubiquitin thioesterase that acts at the late endosome/prevacuolar compartment to recover ubiquitin from ubiquitinated membrane proteins en route to the vacuole. Also removes ubiquitin from soluble proteins targeted to proteasomes. Is essential to maintain a normal level of free ubiquitin. Required for promoting coordination of DNA replication and avoids DNA overreplication. The polypeptide is Ubiquitin carboxyl-terminal hydrolase 4 (DOA4) (Eremothecium gossypii (strain ATCC 10895 / CBS 109.51 / FGSC 9923 / NRRL Y-1056) (Yeast)).